A 200-amino-acid chain; its full sequence is Molybdenum cofactor guanylyltransferase (200 aa).

Residues 15-17 (LSG), K28, D74, and D104 each bind GTP. D104 contacts Mg(2+).

This sequence belongs to the MobA family. As to quaternary structure, monomer. Requires Mg(2+) as cofactor.

It is found in the cytoplasm. The enzyme catalyses Mo-molybdopterin + GTP + H(+) = Mo-molybdopterin guanine dinucleotide + diphosphate. Its function is as follows. Transfers a GMP moiety from GTP to Mo-molybdopterin (Mo-MPT) cofactor (Moco or molybdenum cofactor) to form Mo-molybdopterin guanine dinucleotide (Mo-MGD) cofactor. This Pseudomonas fluorescens (strain SBW25) protein is Molybdenum cofactor guanylyltransferase.